Here is a 311-residue protein sequence, read N- to C-terminus: CD-NTase-associated protein 6 (311 aa).

ATP contacts are provided by residues 84–89 and 215–216; these read GSGKTE and RR.

Belongs to the AAA ATPase family. Homohexamer. Forms a 1:1:6 CdnC:Cap7:Cap6 complex.

In terms of biological role, regulates complex assembly in a CBASS antivirus system. CBASS (cyclic oligonucleotide-based antiphage signaling system) provides immunity against bacteriophage. The CD-NTase protein synthesizes cyclic nucleotides in response to infection; these serve as specific second messenger signals. The signals activate a diverse range of effectors, leading to bacterial cell death and thus abortive phage infection. A type III-C(AAA) CBASS system. Binds and disassembles an active CdnC:Cap7 (Cap7 is also called HORMA) complex, inhibiting the complex's ability to synthesize cyclic nucleotide second messengers. An AAA+-ATPase remodeler, in the absence of foreign threat Cap6 (also called Trip13) probably maintains the Cap7 protein in its open, inactive state. Once activated (presumably by a bacteriophage protein) Cap7 binds to and activates its cognate CD-NTase (CdnC in this bacteria) to synthesize cAAA, a cyclic nucleotide second messenger. cAAA activates the NucC endonuclease which degrades all DNA in the infected cell, causing cell death and abortive phage infection. Functionally, protects E.coli strain JP313 against bacteriophage lambda cI- infection. When the cdnC-cap7-cap6-nucC operon is transformed into a susceptible E.coli strain it confers bacteriophage lambda cI- immunity. Mutations in the sensor (Cap7 also called HORMA) or effector proteins (CdnC, NucC) but not the disassembly protein (Cap6 also called Trip13) no longer confer immunity. The presence of the intact operon leads to culture collapse and cell death, which occurs before the phage has finished its replication cycle, thus protecting non-infected bacteria by aborting the phage infection and preventing its propagation. This Escherichia coli (strain MS 115-1) protein is CD-NTase-associated protein 6.